The following is a 119-amino-acid chain: Large ribosomal subunit protein uL18 (119 aa).

Over residues 1–10 (MKKIKEAEQR) the composition is skewed to basic and acidic residues. Residues 1–20 (MKKIKEAEQRKLRRKKRIKD) form a disordered region.

Belongs to the universal ribosomal protein uL18 family. Part of the 50S ribosomal subunit; part of the 5S rRNA/L5/L18/L25 subcomplex. Contacts the 5S and 23S rRNAs.

In terms of biological role, this is one of the proteins that bind and probably mediate the attachment of the 5S RNA into the large ribosomal subunit, where it forms part of the central protuberance. The sequence is that of Large ribosomal subunit protein uL18 from Borreliella burgdorferi (strain ATCC 35210 / DSM 4680 / CIP 102532 / B31) (Borrelia burgdorferi).